The chain runs to 305 residues: NK1 transcription factor-related protein 2 (305 aa).

Disordered regions lie at residues Glu51 to Arg158 and Lys210 to Leu257. A compositionally biased stretch (acidic residues) spans Ser87–Glu96. Over residues Asp97–Pro115 the composition is skewed to basic and acidic residues. Residues Ala129 to Gly140 show a composition bias toward low complexity. The homeobox DNA-binding region spans Pro156 to Asn215.

It belongs to the NK-1 homeobox family. Interacts (via the homeodomain) with HIPK1, HIPK2, and HIPK3. Phosphorylated by HIPK2 in vitro. In terms of tissue distribution, expression detected in the brain, testis and spleen. In the testis, expressed in the germ cells of the seminiferous epithelium, predominantly in elongating spermatids and spermatozoa. Expressed throughout the brain with highest levels in regions of the cerebral cortex, hippocampus, diencephalon, pons, medulla and cerebellum.

Its subcellular location is the nucleus. It is found in the nucleolus. In terms of biological role, transcriptional repressor. May play a role in early development as a Wnt/beta-catenin effector, hence controlling pluripotency and preimplantation development of embryonic stem cells. May promote adipogenesis in mesenchymal stem cells, possibly by inhibiting the expression of the antiadipogenic factor NR2F2. May inhibit osteoblastogenic differentiation. This chain is NK1 transcription factor-related protein 2 (Nkx1-2), found in Mus musculus (Mouse).